Reading from the N-terminus, the 748-residue chain is EF-hand domain-containing family member C2 (748 aa).

3 DM10 domains span residues 75–182 (DKQV…VKMG), 226–366 (DRQV…RSKY), and 428–535 (VSNV…EQHA). 2 consecutive EF-hand domains span residues 556–591 (EQQKTVKQFFTMSDPSSTGSLPYESFRTLLADLDVE) and 631–666 (EKFSEMIQAFTHEDRDRCGQLSSKEARIICKAFRLP).

It is found in the cytoplasm. The protein localises to the cytoskeleton. It localises to the cilium axoneme. Functionally, microtubule inner protein (MIP) part of the dynein-decorated doublet microtubules (DMTs) in cilia axoneme, which is required for motile cilia beating. The chain is EF-hand domain-containing family member C2 (efhc2) from Danio rerio (Zebrafish).